Here is a 129-residue protein sequence, read N- to C-terminus: Large ribosomal subunit protein uL22 (129 aa).

This sequence belongs to the universal ribosomal protein uL22 family. Part of the 50S ribosomal subunit.

This protein binds specifically to 23S rRNA; its binding is stimulated by other ribosomal proteins, e.g. L4, L17, and L20. It is important during the early stages of 50S assembly. It makes multiple contacts with different domains of the 23S rRNA in the assembled 50S subunit and ribosome. Its function is as follows. The globular domain of the protein is located near the polypeptide exit tunnel on the outside of the subunit, while an extended beta-hairpin is found that lines the wall of the exit tunnel in the center of the 70S ribosome. This Beijerinckia indica subsp. indica (strain ATCC 9039 / DSM 1715 / NCIMB 8712) protein is Large ribosomal subunit protein uL22.